The primary structure comprises 404 residues: NADH-quinone oxidoreductase subunit D 1 (404 aa).

The protein belongs to the complex I 49 kDa subunit family. As to quaternary structure, NDH-1 is composed of 14 different subunits. Subunits NuoB, C, D, E, F, and G constitute the peripheral sector of the complex.

It localises to the cell membrane. It catalyses the reaction a quinone + NADH + 5 H(+)(in) = a quinol + NAD(+) + 4 H(+)(out). NDH-1 shuttles electrons from NADH, via FMN and iron-sulfur (Fe-S) centers, to quinones in the respiratory chain. The immediate electron acceptor for the enzyme in this species is believed to be a menaquinone. Couples the redox reaction to proton translocation (for every two electrons transferred, four hydrogen ions are translocated across the cytoplasmic membrane), and thus conserves the redox energy in a proton gradient. In Symbiobacterium thermophilum (strain DSM 24528 / JCM 14929 / IAM 14863 / T), this protein is NADH-quinone oxidoreductase subunit D 1.